A 182-amino-acid chain; its full sequence is MQFNIPTLLTLFRVALIPFFVLAFYLPFVWAPLLCALIFVFAAVTDWFDGFLARRWKQTTRFGAFLDPVADKVMVAVALVLVAEYYHSWWITLPAATMIAREIIISALREWMAEIGKRSSVAVSWIGKVKTTAQMMALFALLWRPERIVEGIGVAALYIAAVLTFWSMFQYLNAARHDLLEP.

The Cytoplasmic portion of the chain corresponds to 2 to 12 (QFNIPTLLTLF). A helical transmembrane segment spans residues 13-37 (RVALIPFFVLAFYLPFVWAPLLCAL). Residues 38 to 60 (IFVFAAVTDWFDGFLARRWKQTT) lie on the Periplasmic side of the membrane. Residues 61-81 (RFGAFLDPVADKVMVAVALVL) form a helical membrane-spanning segment. At 82-86 (VAEYY) the chain is on the cytoplasmic side. A helical transmembrane segment spans residues 87-107 (HSWWITLPAATMIAREIIISA). The Periplasmic segment spans residues 108–145 (LREWMAEIGKRSSVAVSWIGKVKTTAQMMALFALLWRP). Residues 146–168 (ERIVEGIGVAALYIAAVLTFWSM) form a helical membrane-spanning segment. The Cytoplasmic portion of the chain corresponds to 169-181 (FQYLNAARHDLLE).

The protein belongs to the CDP-alcohol phosphatidyltransferase class-I family.

It localises to the cell inner membrane. The catalysed reaction is a CDP-1,2-diacyl-sn-glycerol + sn-glycerol 3-phosphate = a 1,2-diacyl-sn-glycero-3-phospho-(1'-sn-glycero-3'-phosphate) + CMP + H(+). The protein operates within phospholipid metabolism; phosphatidylglycerol biosynthesis; phosphatidylglycerol from CDP-diacylglycerol: step 1/2. Catalyzes the conversion of cytidine diphosphate diacylglycerol (CDP-DG) and glycerol 3-phosphate into phosphatidylglycerol. Essential for the synthesis of anionic phospholipids, thereby playing a role in balancing the ratio of zwitterionic and anionic phospholipids, which is thought to be important for normal membrane function. This is CDP-diacylglycerol--glycerol-3-phosphate 3-phosphatidyltransferase from Pectobacterium atrosepticum (strain SCRI 1043 / ATCC BAA-672) (Erwinia carotovora subsp. atroseptica).